We begin with the raw amino-acid sequence, 393 residues long: S-adenosylmethionine synthase 2 (393 aa).

Glu-9 lines the Mg(2+) pocket. His-15 is a binding site for ATP. Position 43 (Glu-43) interacts with K(+). Glu-56 and Gln-99 together coordinate L-methionine. ATP-binding positions include 167–169, 235–238, Asp-246, 252–253, Ala-269, Lys-273, and Lys-277; these read DGK, SGRF, and RK. Asp-246 provides a ligand contact to L-methionine. L-methionine is bound at residue Lys-277.

The protein belongs to the AdoMet synthase family. Homotetramer. Mn(2+) is required as a cofactor. Mg(2+) serves as cofactor. It depends on Co(2+) as a cofactor. The cofactor is K(+).

Its subcellular location is the cytoplasm. The enzyme catalyses L-methionine + ATP + H2O = S-adenosyl-L-methionine + phosphate + diphosphate. It functions in the pathway amino-acid biosynthesis; S-adenosyl-L-methionine biosynthesis; S-adenosyl-L-methionine from L-methionine: step 1/1. Functionally, catalyzes the formation of S-adenosylmethionine from methionine and ATP. The reaction comprises two steps that are both catalyzed by the same enzyme: formation of S-adenosylmethionine (AdoMet) and triphosphate, and subsequent hydrolysis of the triphosphate. The protein is S-adenosylmethionine synthase 2 (SAMS2) of Elaeagnus umbellata (Autumn olive).